We begin with the raw amino-acid sequence, 70 residues long: Large ribosomal subunit protein bL31 (70 aa).

Positions 17, 19, 37, and 40 each coordinate Zn(2+).

This sequence belongs to the bacterial ribosomal protein bL31 family. Type A subfamily. Part of the 50S ribosomal subunit. The cofactor is Zn(2+).

Binds the 23S rRNA. This Clostridium kluyveri (strain NBRC 12016) protein is Large ribosomal subunit protein bL31.